The chain runs to 79 residues: Small cysteine-rich protein 2 (79 aa).

The N-terminal stretch at 1–21 (MRSQHVLILLLGLVCASQVLG) is a signal peptide. The propeptide occupies 22–35 (KHLTKVKAKALHYD).

It belongs to the Cnidaria small cysteine-rich protein (SCRiP) family. delta subfamily. Post-translationally, contains 4 disulfide bonds.

It localises to the secreted. Its subcellular location is the nematocyst. In terms of biological role, this recombinant protein induces severe neurotoxicity on zebrafish larvae (Danio rerio) at a concentration of 230 mg/ml, but does not show toxicity when injected in blowfly larvae (Sarcophaga falculata). All fish incubated with this protein died within 200 minutes of exposure. Has also been claimed to be implied in calcification, but this function seems improbable. In Acropora millepora (Staghorn coral), this protein is Small cysteine-rich protein 2.